A 490-amino-acid polypeptide reads, in one-letter code: Subtilisin-like protease 8 (490 aa).

The N-terminal stretch at 1–26 (MKGLLSLSVLPVLAYASPMIVDSIHQ) is a signal peptide. Residues 27–134 (NAAPILSSTN…YIERDSEVHT (108 aa)) constitute a propeptide that is removed on maturation. The Inhibitor I9 domain maps to 43 to 134 (SYIVVFKKGV…YIERDSEVHT (92 aa)). The Peptidase S8 domain occupies 144-450 (PWGLARISHR…GGSDDYKKII (307 aa)). Residues Asp-180 and His-212 each act as charge relay system in the active site. N-linked (GlcNAc...) asparagine glycosylation is present at Asn-282. Ser-378 serves as the catalytic Charge relay system. An N-linked (GlcNAc...) asparagine glycan is attached at Asn-456.

Belongs to the peptidase S8 family.

Its subcellular location is the secreted. Functionally, secreted subtilisin-like serine protease with keratinolytic activity that contributes to pathogenicity. The sequence is that of Subtilisin-like protease 8 (SUB8) from Arthroderma benhamiae (strain ATCC MYA-4681 / CBS 112371) (Trichophyton mentagrophytes).